The following is a 256-amino-acid chain: uncharacterized protein (256 aa).

This is an uncharacterized protein from Escherichia coli (strain K12).